A 316-amino-acid chain; its full sequence is Putative S-adenosyl-L-methionine-dependent methyltransferase MAB_4606c (316 aa).

S-adenosyl-L-methionine-binding positions include aspartate 137 and aspartate 166–leucine 167.

Belongs to the UPF0677 family.

In terms of biological role, exhibits S-adenosyl-L-methionine-dependent methyltransferase activity. This Mycobacteroides abscessus (strain ATCC 19977 / DSM 44196 / CCUG 20993 / CIP 104536 / JCM 13569 / NCTC 13031 / TMC 1543 / L948) (Mycobacterium abscessus) protein is Putative S-adenosyl-L-methionine-dependent methyltransferase MAB_4606c.